We begin with the raw amino-acid sequence, 388 residues long: MIISAASDYRAAAEARLPPFLFHYIDGGAYAEHTLRRNVSDLADVALRQRVLRNMSDLRLSTELFGETLAMPVALAPVGLTGMYARRGEVQAARAAAARGIPFTLSTVSVCPIEEVAPAIERPMWFQLYVLKDRGFMRNALERAKAAGVTTLVFTVDMPTPGARYRDAHSGMSGPNASLRRMLQAVTHPRWAWDVGLLGKPHDLGNISAYRGSPTGLQDYIGWLGANFDPSIAWKDLEWIREFWTGPMVIKGILDPEDARDAVRFGADGIVVSNHGGRQLDGVLSSARALPAIADAVKGELKILADSGIRSGLDVVRMLALGADAVLLGRAFVYALAAAGQAGVENLLTLIEKEMRVAMTLTGTHSIADISADALSRVTRERADAISP.

The FMN hydroxy acid dehydrogenase domain maps to 1–380; that stretch reads MIISAASDYR…SADALSRVTR (380 aa). Tyr-24 is a substrate binding site. Positions 106 and 127 each coordinate FMN. Tyr-129 provides a ligand contact to substrate. Thr-155 contributes to the FMN binding site. Residue Arg-164 participates in substrate binding. Lys-251 serves as a coordination point for FMN. His-275 serves as the catalytic Proton acceptor. Arg-278 contributes to the substrate binding site. Residue 306 to 330 coordinates FMN; sequence DSGIRSGLDVVRMLALGADAVLLGR.

The protein belongs to the FMN-dependent alpha-hydroxy acid dehydrogenase family. It depends on FMN as a cofactor.

Its subcellular location is the cell inner membrane. It catalyses the reaction (S)-lactate + A = pyruvate + AH2. Its function is as follows. Catalyzes the conversion of L-lactate to pyruvate. Is coupled to the respiratory chain. The protein is L-lactate dehydrogenase of Xanthomonas axonopodis pv. citri (strain 306).